The chain runs to 251 residues: MNLNSIPAFDDNYIWVLNDEAGRCLIVDPGDAEPVLNAITANNWQPEAIFLTHHHHDHVGGVKELVEKFPQIVVYGPQETQDKGTTQVVKDGETAFVLGHEFSVIATPGHTLGHICYFSKPYLFCGDTLFSGGCGRLFEGTASQMYQSLKKLSALPDDTLVCCAHEYTLSNMKFALSILPHDLSINDYYRKVKELRAKNQITLPVILKNERQINVFLRTEDIDLINVINEETLLQQPEERFAWLRSKKDRF.

Positions 53, 55, 57, 58, 110, 127, and 165 each coordinate Zn(2+).

The protein belongs to the metallo-beta-lactamase superfamily. Glyoxalase II family. In terms of assembly, monomer. Zn(2+) serves as cofactor.

It carries out the reaction an S-(2-hydroxyacyl)glutathione + H2O = a 2-hydroxy carboxylate + glutathione + H(+). It functions in the pathway secondary metabolite metabolism; methylglyoxal degradation; (R)-lactate from methylglyoxal: step 2/2. Thiolesterase that catalyzes the hydrolysis of S-D-lactoyl-glutathione to form glutathione and D-lactic acid. In Escherichia coli O9:H4 (strain HS), this protein is Hydroxyacylglutathione hydrolase.